The chain runs to 275 residues: Ditrans,polycis-undecaprenyl-diphosphate synthase ((2E,6E)-farnesyl-diphosphate specific) (275 aa).

Residue Asp-45 is part of the active site. Asp-45 serves as a coordination point for Mg(2+). Substrate contacts are provided by residues 46-49 (GNGR), Trp-50, Arg-58, His-62, and 90-92 (SSE). Asn-93 functions as the Proton acceptor in the catalytic mechanism. Residues Trp-94, Arg-96, Arg-213, and 219-221 (RIS) each bind substrate. Position 232 (Glu-232) interacts with Mg(2+).

Belongs to the UPP synthase family. In terms of assembly, homodimer. Mg(2+) serves as cofactor.

The catalysed reaction is 8 isopentenyl diphosphate + (2E,6E)-farnesyl diphosphate = di-trans,octa-cis-undecaprenyl diphosphate + 8 diphosphate. Catalyzes the sequential condensation of isopentenyl diphosphate (IPP) with (2E,6E)-farnesyl diphosphate (E,E-FPP) to yield (2Z,6Z,10Z,14Z,18Z,22Z,26Z,30Z,34E,38E)-undecaprenyl diphosphate (di-trans,octa-cis-UPP). UPP is the precursor of glycosyl carrier lipid in the biosynthesis of bacterial cell wall polysaccharide components such as peptidoglycan and lipopolysaccharide. The protein is Ditrans,polycis-undecaprenyl-diphosphate synthase ((2E,6E)-farnesyl-diphosphate specific) of Shewanella oneidensis (strain ATCC 700550 / JCM 31522 / CIP 106686 / LMG 19005 / NCIMB 14063 / MR-1).